The sequence spans 432 residues: Neuronal pentraxin-1 (432 aa).

Positions 1 to 22 (MLAGRAARTCALLALCLLGSRA) are cleaved as a signal peptide. The interval 90–128 (ESQSTLDAGPGEARSGGGRKQPGSGKNTMGDLSRTPASE) is disordered. N-linked (GlcNAc...) asparagine glycosylation is found at asparagine 154 and asparagine 193. The region spanning 226–428 (DKFQLTFPLR…GATKWTFEAC (203 aa)) is the Pentraxin (PTX) domain. Cysteine 256 and cysteine 316 form a disulfide bridge. Ca(2+) is bound by residues asparagine 280, glutamate 358, glutamine 359, aspartate 360, and glutamine 370.

As to quaternary structure, homooligomer or heterooligomer (probably pentamer) with neuronal pentraxin receptor (NPTXR). Requires Ca(2+) as cofactor. In terms of processing, glycosylated. As to expression, cerebellum, hippocampus and cerebral cortex.

It is found in the secreted. The protein resides in the cytoplasmic vesicle. The protein localises to the secretory vesicle. It localises to the endoplasmic reticulum. May be involved in mediating uptake of synaptic material during synapse remodeling or in mediating the synaptic clustering of AMPA glutamate receptors at a subset of excitatory synapses. The polypeptide is Neuronal pentraxin-1 (Nptx1) (Rattus norvegicus (Rat)).